A 241-amino-acid chain; its full sequence is MAADEELSGVWQARVVTLFPDAFPGVLGLSLTGKALQDGRWQLHTHDLRSFGVGKHRNVDDTPAGGGAGMVMRADVVGPAIEAAQRFARGRWPILYMSPRGRPFTQKMAKDLARCDGVTVLCGRFEGVDERVLEHFGVTEVSIGDYVLTGGEIAAQTVLDATVRLLPGVLGNAESTVEESHSNGLLEHPQYTRPAIWEGHAIPEVLMSGNHAEIAKWRAAQSHRLTQSRRPDLWAAKGAKE.

S-adenosyl-L-methionine contacts are provided by residues Gly-123 and 143–148 (IGDYVL).

This sequence belongs to the RNA methyltransferase TrmD family. As to quaternary structure, homodimer.

It localises to the cytoplasm. It catalyses the reaction guanosine(37) in tRNA + S-adenosyl-L-methionine = N(1)-methylguanosine(37) in tRNA + S-adenosyl-L-homocysteine + H(+). Specifically methylates guanosine-37 in various tRNAs. The polypeptide is tRNA (guanine-N(1)-)-methyltransferase (Roseobacter denitrificans (strain ATCC 33942 / OCh 114) (Erythrobacter sp. (strain OCh 114))).